The sequence spans 113 residues: Large ribosomal subunit protein bL19 (113 aa).

It belongs to the bacterial ribosomal protein bL19 family.

Its function is as follows. This protein is located at the 30S-50S ribosomal subunit interface and may play a role in the structure and function of the aminoacyl-tRNA binding site. The chain is Large ribosomal subunit protein bL19 from Corynebacterium kroppenstedtii (strain DSM 44385 / JCM 11950 / CIP 105744 / CCUG 35717).